The chain runs to 470 residues: Na(+)/H(+) antiporter NhaA 2 (470 aa).

Helical transmembrane passes span 34 to 54 (FLHI…IALL), 85 to 105 (LEWV…GMEI), 121 to 141 (ALPA…YLLL), 150 to 170 (GWGV…TLLG), 179 to 199 (VLLL…IAVF), 202 to 222 (SGVA…VFAM), 241 to 261 (WAGV…IGLI), 317 to 337 (SLIA…FALA), 357 to 377 (LATA…ACWL), 395 to 415 (LLVL…IAQL), and 423 to 443 (LAAG…VALV).

Belongs to the NhaA Na(+)/H(+) (TC 2.A.33) antiporter family.

It is found in the cell inner membrane. The enzyme catalyses Na(+)(in) + 2 H(+)(out) = Na(+)(out) + 2 H(+)(in). Na(+)/H(+) antiporter that extrudes sodium in exchange for external protons. The sequence is that of Na(+)/H(+) antiporter NhaA 2 from Myxococcus xanthus (strain DK1622).